The primary structure comprises 367 residues: Dual-specificity RNA methyltransferase RlmN (367 aa).

Glu-93 functions as the Proton acceptor in the catalytic mechanism. In terms of domain architecture, Radical SAM core spans 99–333 (EEDRATLCVS…VIVRKTRGDD (235 aa)). Cys-106 and Cys-338 are disulfide-bonded. Residues Cys-113, Cys-117, and Cys-120 each contribute to the [4Fe-4S] cluster site. Residues 162-163 (GE), Ser-194, 216-218 (SLH), and Asn-295 contribute to the S-adenosyl-L-methionine site. Cys-338 acts as the S-methylcysteine intermediate in catalysis.

Belongs to the radical SAM superfamily. RlmN family. [4Fe-4S] cluster serves as cofactor.

The protein localises to the cytoplasm. It carries out the reaction adenosine(2503) in 23S rRNA + 2 reduced [2Fe-2S]-[ferredoxin] + 2 S-adenosyl-L-methionine = 2-methyladenosine(2503) in 23S rRNA + 5'-deoxyadenosine + L-methionine + 2 oxidized [2Fe-2S]-[ferredoxin] + S-adenosyl-L-homocysteine. The enzyme catalyses adenosine(37) in tRNA + 2 reduced [2Fe-2S]-[ferredoxin] + 2 S-adenosyl-L-methionine = 2-methyladenosine(37) in tRNA + 5'-deoxyadenosine + L-methionine + 2 oxidized [2Fe-2S]-[ferredoxin] + S-adenosyl-L-homocysteine. In terms of biological role, specifically methylates position 2 of adenine 2503 in 23S rRNA and position 2 of adenine 37 in tRNAs. m2A2503 modification seems to play a crucial role in the proofreading step occurring at the peptidyl transferase center and thus would serve to optimize ribosomal fidelity. The chain is Dual-specificity RNA methyltransferase RlmN from Aeromonas hydrophila subsp. hydrophila (strain ATCC 7966 / DSM 30187 / BCRC 13018 / CCUG 14551 / JCM 1027 / KCTC 2358 / NCIMB 9240 / NCTC 8049).